The sequence spans 375 residues: Queuine tRNA-ribosyltransferase (375 aa).

The active-site Proton acceptor is aspartate 89. Substrate contacts are provided by residues 89 to 93 (DSGGF), aspartate 143, glutamine 187, and glycine 214. The interval 245–251 (GVGKPED) is RNA binding. Aspartate 264 functions as the Nucleophile in the catalytic mechanism. The segment at 269–273 (TRNAR) is RNA binding; important for wobble base 34 recognition. Cysteine 302, cysteine 304, cysteine 307, and histidine 333 together coordinate Zn(2+).

Belongs to the queuine tRNA-ribosyltransferase family. As to quaternary structure, homodimer. Within each dimer, one monomer is responsible for RNA recognition and catalysis, while the other monomer binds to the replacement base PreQ1. The cofactor is Zn(2+).

It catalyses the reaction 7-aminomethyl-7-carbaguanine + guanosine(34) in tRNA = 7-aminomethyl-7-carbaguanosine(34) in tRNA + guanine. Its pathway is tRNA modification; tRNA-queuosine biosynthesis. Catalyzes the base-exchange of a guanine (G) residue with the queuine precursor 7-aminomethyl-7-deazaguanine (PreQ1) at position 34 (anticodon wobble position) in tRNAs with GU(N) anticodons (tRNA-Asp, -Asn, -His and -Tyr). Catalysis occurs through a double-displacement mechanism. The nucleophile active site attacks the C1' of nucleotide 34 to detach the guanine base from the RNA, forming a covalent enzyme-RNA intermediate. The proton acceptor active site deprotonates the incoming PreQ1, allowing a nucleophilic attack on the C1' of the ribose to form the product. After dissociation, two additional enzymatic reactions on the tRNA convert PreQ1 to queuine (Q), resulting in the hypermodified nucleoside queuosine (7-(((4,5-cis-dihydroxy-2-cyclopenten-1-yl)amino)methyl)-7-deazaguanosine). The sequence is that of Queuine tRNA-ribosyltransferase from Citrobacter koseri (strain ATCC BAA-895 / CDC 4225-83 / SGSC4696).